A 379-amino-acid polypeptide reads, in one-letter code: Peritrophin-48 (379 aa).

Positions 1–20 are cleaved as a signal peptide; that stretch reads MKAKTLTATLALILLAFAQA. Chitin-binding type-2 domains follow at residues 25 to 83 and 86 to 143; these read ASYC…NCFF and ANPC…NTGN. Cystine bridges form between C60–C73 and C120–C133. Residues N150 and N168 are each glycosylated (N-linked (GlcNAc...) asparagine). Chitin-binding type-2 domains follow at residues 151 to 208, 224 to 283, and 285 to 356; these read LSVC…ACSR, TSPC…RTLK, and CNRC…ACEN. C185 and C198 are disulfide-bonded. N247 and N252 each carry an N-linked (GlcNAc...) asparagine glycan. C324 and C337 form a disulfide bridge. 3 N-linked (GlcNAc...) asparagine glycosylation sites follow: N341, N356, and N373.

In terms of processing, glycosylated. In terms of tissue distribution, larval peritrophic membrane.

Its function is as follows. Binds chitin and may bind related oligosaccharide structures. In Chrysomya bezziana (Old world screw-worm fly), this protein is Peritrophin-48.